The following is a 266-amino-acid chain: ATP synthase subunit a (266 aa).

The next 5 membrane-spanning stretches (helical) occupy residues 33–53, 95–115, 141–161, 206–226, and 237–257; these read FWTLNIDSMFFSVVLGLLFLA, VIAPLALTVFVWVFLMNLMDL, DVNITLSMALGVFILIIFYSI, LFGNMYAGELIFILIAGLLPW, and AIFHILIITLQAFIFMVLTIV.

It belongs to the ATPase A chain family. F-type ATPases have 2 components, CF(1) - the catalytic core - and CF(0) - the membrane proton channel. CF(1) has five subunits: alpha(3), beta(3), gamma(1), delta(1), epsilon(1). CF(0) has three main subunits: a(1), b(2) and c(9-12). The alpha and beta chains form an alternating ring which encloses part of the gamma chain. CF(1) is attached to CF(0) by a central stalk formed by the gamma and epsilon chains, while a peripheral stalk is formed by the delta and b chains.

It is found in the cell inner membrane. Its function is as follows. Key component of the proton channel; it plays a direct role in the translocation of protons across the membrane. The sequence is that of ATP synthase subunit a from Klebsiella pneumoniae subsp. pneumoniae (strain ATCC 700721 / MGH 78578).